The sequence spans 130 residues: UPF0102 protein AHA_3896 (130 aa).

It belongs to the UPF0102 family.

The polypeptide is UPF0102 protein AHA_3896 (Aeromonas hydrophila subsp. hydrophila (strain ATCC 7966 / DSM 30187 / BCRC 13018 / CCUG 14551 / JCM 1027 / KCTC 2358 / NCIMB 9240 / NCTC 8049)).